The following is a 113-amino-acid chain: U11-theraphotoxin-Hhn1g (113 aa).

Positions methionine 1 to alanine 21 are cleaved as a signal peptide. Positions aspartate 22–arginine 74 are excised as a propeptide. Residues glutamate 61 to aspartate 83 form a disordered region. 3 disulfides stabilise this stretch: cysteine 75/cysteine 90, cysteine 82/cysteine 95, and cysteine 89/cysteine 110.

Belongs to the neurotoxin 14 (magi-1) family. 01 (HNTX-16) subfamily. In terms of tissue distribution, expressed by the venom gland.

It is found in the secreted. Probable ion channel inhibitor. In Cyriopagopus hainanus (Chinese bird spider), this protein is U11-theraphotoxin-Hhn1g.